The chain runs to 165 residues: MSSRSRSTFLAIACFVLIDWVTKLAVLLYLGNLPDANPILYQYSWGKLLFCICPTFNEGAAFGLFAKYKYFLFFIRITIILGILAFLFLRKKTSSPAIRFSLILLCSGAIGNVGDIVFYRHVVDFISIGYKRWFFPTFNFADIFISLGTLIFIYKLYFPTKQKIK.

Transmembrane regions (helical) follow at residues Phe9–Tyr29, Lys69–Leu89, and Ile98–Phe118. Active-site residues include Asp124 and Asp142. Residues Trp133 to Ile153 form a helical membrane-spanning segment.

This sequence belongs to the peptidase A8 family.

It is found in the cell inner membrane. The enzyme catalyses Release of signal peptides from bacterial membrane prolipoproteins. Hydrolyzes -Xaa-Yaa-Zaa-|-(S,diacylglyceryl)Cys-, in which Xaa is hydrophobic (preferably Leu), and Yaa (Ala or Ser) and Zaa (Gly or Ala) have small, neutral side chains.. The protein operates within protein modification; lipoprotein biosynthesis (signal peptide cleavage). This protein specifically catalyzes the removal of signal peptides from prolipoproteins. The chain is Lipoprotein signal peptidase from Chlamydia abortus (strain DSM 27085 / S26/3) (Chlamydophila abortus).